A 3969-amino-acid polypeptide reads, in one-letter code: Histone-lysine N-methyltransferase 2A (3969 aa).

3 disordered regions span residues 1–108, 132–253, and 301–352; these read MAHS…LLRV, VFGE…EDSL, and RRRG…RQSP. The short motif at 6-25 is the Menin-binding motif (MBM) element; sequence RWRFPARPGTTGGGGGGGRR. Over residues 15 to 29 the composition is skewed to gly residues; sequence TTGGGGGGGRRGLGG. Composition is skewed to low complexity over residues 59–69 and 77–104; these read AVAAAAAAAGS and GAAA…SGPA. An Integrase domain-binding motif 1 (IBM1) motif is present at residues 123–134; sequence GTNLRRFRAVFG. 2 positions are modified to phosphoserine; by CK2: serine 136 and serine 142. Residues 147–152 carry the Integrase domain-binding motif 2 (IBM2) motif; it reads QFLGFG. Position 153 is a phosphoserine (serine 153). Residues 169–180 constitute a DNA-binding region (a.T hook 1); sequence KTSPRKPRGRPR. Residue serine 197 is modified to Phosphoserine. Composition is skewed to basic and acidic residues over residues 202–220 and 237–253; these read SETK…SIEK and HGKD…EDSL. The a.T hook 2 DNA-binding region spans 217-227; the sequence is SIEKKRGRPPT. Lysine 239 is modified (N6-acetyllysine). Positions 301–309 form a DNA-binding region, a.T hook 3; the sequence is RRRGRPPST. The segment covering 323 to 347 has biased composition (basic and acidic residues); the sequence is ELEKPQKVRKDKEGTPPLTKEDKTV. The residue at position 373 (lysine 373) is an N6-acetyllysine. The segment at 445-585 is disordered; it reads STPNSRFSAP…SSISDHTPWL (141 aa). The segment covering 452–491 has biased composition (low complexity); that stretch reads SAPSCGSSEKSSAASQHSSQMSSDSSRSSSPSVDTSTDSQ. Serine 518 carries the phosphoserine modification. Residues 546–559 are compositionally biased toward low complexity; that stretch reads LSTLQSAPQQQTSS. Over residues 560-573 the composition is skewed to pro residues; sequence SPPPPLLTPPPPLQ. Position 636 is an N6-acetyllysine (lysine 636). Serine 680 is subject to Phosphoserine. Disordered stretches follow at residues 713-780, 798-949, 1038-1066, and 1106-1166; these read ESVT…SSSL, FPSH…TSVT, EKSK…VRGP, and SSMG…VPED. Residues 716 to 732 are compositionally biased toward polar residues; sequence TLPSNRTSAGTSSSGVS. Positions 762–780 are enriched in low complexity; the sequence is LSSSELSPLTPPSSVSSSL. Polar residues predominate over residues 798–808; it reads FPSHSLTQSGE. The segment covering 820–841 has biased composition (low complexity); sequence TSAPAEPFSSSSPTPLFPWFTP. Position 840 is a phosphothreonine (threonine 840). Positions 846 to 890 are enriched in basic and acidic residues; sequence ERGRNKDKAPEELSKDRDADKSVEKDKSRERDREREKENKRESRK. Phosphoserine is present on residues serine 926 and serine 1056. Positions 1043-1062 are enriched in polar residues; the sequence is LKQTDQPKAQGQESDSSETS. Residue lysine 1130 is modified to N6-acetyllysine. The CXXC-type zinc-finger motif lies at 1147–1195; that stretch reads KKGRRSRRCGQCPGCQVPEDCGVCTNCLDKPKFGGRNIKKQCCKMRKCQ. Zn(2+) is bound by residues cysteine 1155, cysteine 1158, cysteine 1161, cysteine 1167, cysteine 1170, cysteine 1173, cysteine 1189, and cysteine 1194. A disordered region spans residues 1200–1375; the sequence is MPSKAYLQKQ…PPVNKQENAG (176 aa). Over residues 1220-1232 the composition is skewed to basic and acidic residues; that stretch reads SKTSEKKDSKESS. The segment covering 1233-1243 has biased composition (low complexity); that stretch reads VVKNVVDSSQK. The residue at position 1235 (lysine 1235) is an N6-acetyllysine. Basic and acidic residues predominate over residues 1248-1273; it reads AREDPAPKKSSSEPPPRKPVEEKSEE. Residues 1284 to 1300 are compositionally biased toward polar residues; sequence KQATTPASRKSSKQVSQ. The span at 1304–1313 shows a compositional bias: pro residues; the sequence is VIPPQPPTTG. 3 PHD-type zinc fingers span residues 1431–1482, 1479–1533, and 1566–1627; these read RVVC…CKFC, CKFC…CVRC, and GNFC…CTER. Residues 1584–1600 form an interaction with histone H3K4me3 region; it reads KMMQCGKCDRWVHSKCE. The Bromo domain occupies 1635 to 1765; the sequence is ALEKELQISL…SFFIRQMERV (131 aa). Disordered stretches follow at residues 1663-1713 and 1806-1869; these read YRQA…GVKR and QERE…GIED. Positions 1826 to 1847 are enriched in pro residues; the sequence is APKPKGPGEPDSPTPLHPPTPP. Serine 1837 carries the phosphoserine modification. Threonine 1845 is modified (phosphothreonine). The residue at position 1858 (serine 1858) is a Phosphoserine. The C2HC pre-PHD-type zinc finger occupies 1870–1910; sequence NRQCALCLTYGDDSANDAGRLLYIGQNEWTHVNCALWSAEV. Residues 1931–1978 form a PHD-type 4 zinc finger; it reads LRCEFCQKPGATVGCCLTSCTSNYHFMCSRAKNCVFLDDKKVYCQRHR. Residues 2018 to 2074 enclose the FYR N-terminal domain; that stretch reads NIHMMIGSMTIDCLGILNDLSDCEDKLFPIGYQCSRVYWSTTDARKRCVYTCKIVEC. Disordered regions lie at residues 2081-2133, 2145-2232, 2275-2333, 2373-2460, 2475-2618, 2647-2675, and 2713-2821; these read PDIN…TSGS, IRTP…TTGT, NKNS…KLAP, RGQR…EGNL, GQRP…RYPR, FYSS…STSD, and KISQ…KNLL. The segment covering 2095–2115 has biased composition (polar residues); that stretch reads IAHSPTSFTESSSKESQNTAE. Serine 2098 carries the post-translational modification Phosphoserine. A Phosphothreonine modification is found at threonine 2147. Phosphoserine occurs at positions 2151 and 2201. Residues 2214–2232 show a composition bias toward polar residues; that stretch reads RTGNTYSRNNVSSVSTTGT. Positions 2283 to 2302 are enriched in low complexity; that stretch reads SSSSEMKQSSASDLVSKSSS. Composition is skewed to polar residues over residues 2310–2319 and 2406–2421; these read VLSSKSSEGS and GMSN…MGSS. A compositionally biased stretch (basic and acidic residues) spans 2432–2442; the sequence is SCKETFKEKHS. A Phosphothreonine modification is found at threonine 2525. Residue lysine 2528 forms a Glycyl lysine isopeptide (Lys-Gly) (interchain with G-Cter in SUMO2) linkage. 2 stretches are compositionally biased toward polar residues: residues 2543–2563 and 2573–2592; these read SPAS…SASE and PSPN…QNLP. Position 2611 is a phosphoserine (serine 2611). Positions 2726–2741 are enriched in polar residues; it reads SDTSVTATTRKSSQIP. Residues 2744 to 2782 show a composition bias toward basic and acidic residues; the sequence is NGKENGTENLKIDRPEDAGEKEHVTKSSVGHKNEPKMDN. Residues 2784–2795 show a composition bias toward polar residues; sequence HSVSRVKTQGQD. Serine 2796 bears the Phosphoserine mark. Over residues 2796–2805 the composition is skewed to low complexity; it reads SLEAQLSSLE. Positions 2812–2821 are enriched in polar residues; that stretch reads TSTPSDKNLL. A 9aaTAD motif is present at residues 2847-2855; that stretch reads SDIMDFVLK. Phosphoserine is present on serine 2955. Lysine 2958 bears the N6-acetyllysine mark. 2 disordered regions span residues 2961–3064 and 3166–3244; these read TITE…NAAV and PAAT…SNIA. Composition is skewed to polar residues over residues 2963–2972 and 3016–3030; these read TEKSVASSES and HGNN…STPG. A Phosphoserine modification is found at serine 3036. Over residues 3039–3064 the composition is skewed to polar residues; the sequence is VPIQNQKYVPNSTDSPGPSQISNAAV. Residues 3171-3182 show a composition bias toward low complexity; that stretch reads SSFPPNISNPPS. The segment covering 3198-3216 has biased composition (polar residues); the sequence is VSESSQRTDLSTTVATPSS. The segment covering 3218–3233 has biased composition (basic residues); the sequence is LKKRPISRLQTRKNKK. Threonine 3372 is modified (phosphothreonine). The residue at position 3462 (lysine 3462) is an N6-acetyllysine. Disordered regions lie at residues 3464–3608 and 3620–3643; these read GIHS…GQPA and TQNP…SNFS. Residues 3476-3489 show a composition bias toward polar residues; the sequence is SGPQVSNFTQTVDA. The segment covering 3508–3529 has biased composition (low complexity); that stretch reads SPTSPGGSPSSPSSGQRSASPS. Phosphoserine occurs at positions 3511, 3515, and 3527. Residues 3591 to 3603 show a composition bias toward polar residues; it reads QDTASVEQSSQKE. In terms of domain architecture, FYR C-terminal spans 3666–3747; that stretch reads KKGLVFEISS…KHCRNYKFRF (82 aa). The WDR5 interaction motif (WIN) signature appears at 3762-3767; it reads GSARAE. The disordered stretch occupies residues 3785–3808; sequence HRQPPEYNPNDEEEEEVQLKSARR. Residues 3829–3945 enclose the SET domain; the sequence is EAVGVYRSPI…RGEELTYDYK (117 aa). Residues histidine 3839 and arginine 3841 each coordinate S-adenosyl-L-methionine. The residue at position 3882 (cysteine 3882) is an S-methylcysteine; by autocatalysis. Residues tyrosine 3883 and 3906–3907 contribute to the S-adenosyl-L-methionine site; that span reads NH. Zn(2+) contacts are provided by cysteine 3909 and cysteine 3957. In terms of domain architecture, Post-SET spans 3953–3969; sequence NKLPCNCGAKKCRKFLN. Asparagine 3958 is an S-adenosyl-L-methionine binding site. Positions 3959 and 3964 each coordinate Zn(2+).

This sequence belongs to the class V-like SAM-binding methyltransferase superfamily. Histone-lysine methyltransferase family. TRX/MLL subfamily. In terms of assembly, MLL cleavage product N320 heterodimerizes with MLL cleavage product C180 (via SET and FYRC domains). Component of some MLL1/MLL complex, at least composed of the core components KMT2A/MLL1, ASH2L, HCFC1/HCF1, HCFC2, WDR5, DPY30 and RBBP5, as well as the facultative components BACC1, CHD8, E2F6, HSP70, INO80C, KANSL1, LAS1L, MAX, MCRS1, MEN1, MGA, KAT8/MOF, PELP1, PHF20, PRP31, RING2, RUVB1/TIP49A, RUVB2/TIP49B, SENP3, TAF1, TAF4, TAF6, TAF7, TAF9 and TEX10. Forms a core complex with the evolutionary conserved subcomplex WRAD composed of WDR5, RBBP5, ASH2L/ASH2 and DPY30 subunits; WRAD differentially stimulates the methyltransferase activity. Interacts (via WIN motif) with WDR5; the interaction is direct. Interaction with WDR5 is required for stable interaction with ASH2L and RBBP5, and thereby also for optimal histone methyltransferase activity. Interacts with KAT8/MOF; the interaction is direct. Interacts with SBF1 and PPP1R15A. Interacts with ZNF335. Interacts with CLOCK and BMAL1 in a circadian manner. Interacts with PPIE; this results in decreased histone H3 methyltransferase activity. Interacts with CREBBP. Interacts with the WRAD complex composed of WDR5, RBBP5, ASH2L and DPY30. Interacts (via MBM motif) with MEN1. Interacts (via IBM motifs) with PSIP1 (via IBD domain) with moderate affinity whereas the KMT2A-MEN1 complex interacts with a greater affinity; MEN1 enhances interaction of KMT2A with PSIP1. Phosphorylation increases its affinity for PSIP1. Forms a complex with CREBBP and CREB1. As to quaternary structure, (Microbial infection) Interacts with herpes virus 8/HHV-8 protein LANA1; this interaction regulates the MLL1 histone methyltransferase activity on viral DNA. Post-translationally, proteolytic cleavage by TASP1 generates MLL cleavage product N320 and MLL cleavage product C180, which reassemble through a non-covalent association. 2 cleavage sites exist, cleavage site 1 (CS1) and cleavage site 2 (CS2), to generate MLL cleavage products N320 and C180. CS2 is the major site. Phosphorylation increases its interaction with PSIP1. In terms of processing, auto-methylated at Cys-3882: auto-methylation is inhibited by the WRAD complex and unmodified histone H3. As to expression, heart, lung, brain and T- and B-lymphocytes.

It is found in the nucleus. The enzyme catalyses L-lysyl(4)-[histone H3] + S-adenosyl-L-methionine = N(6)-methyl-L-lysyl(4)-[histone H3] + S-adenosyl-L-homocysteine + H(+). The catalysed reaction is N(6)-methyl-L-lysyl(4)-[histone H3] + S-adenosyl-L-methionine = N(6),N(6)-dimethyl-L-lysyl(4)-[histone H3] + S-adenosyl-L-homocysteine + H(+). It catalyses the reaction L-cysteinyl-[protein] + S-adenosyl-L-methionine = S-methyl-L-cysteinyl-[protein] + S-adenosyl-L-homocysteine + H(+). Functionally, histone methyltransferase that plays an essential role in early development and hematopoiesis. Catalytic subunit of the MLL1/MLL complex, a multiprotein complex that mediates both methylation of 'Lys-4' of histone H3 (H3K4me) complex and acetylation of 'Lys-16' of histone H4 (H4K16ac). Catalyzes methyl group transfer from S-adenosyl-L-methionine to the epsilon-amino group of 'Lys-4' of histone H3 (H3K4) via a non-processive mechanism. Part of chromatin remodeling machinery predominantly forms H3K4me1 and H3K4me2 methylation marks at active chromatin sites where transcription and DNA repair take place. Has weak methyltransferase activity by itself, and requires other component of the MLL1/MLL complex to obtain full methyltransferase activity. Has no activity toward histone H3 phosphorylated on 'Thr-3', less activity toward H3 dimethylated on 'Arg-8' or 'Lys-9', while it has higher activity toward H3 acetylated on 'Lys-9'. Binds to unmethylated CpG elements in the promoter of target genes and helps maintain them in the nonmethylated state. Required for transcriptional activation of HOXA9. Promotes PPP1R15A-induced apoptosis. Plays a critical role in the control of circadian gene expression and is essential for the transcriptional activation mediated by the CLOCK-BMAL1 heterodimer. Establishes a permissive chromatin state for circadian transcription by mediating a rhythmic methylation of 'Lys-4' of histone H3 (H3K4me) and this histone modification directs the circadian acetylation at H3K9 and H3K14 allowing the recruitment of CLOCK-BMAL1 to chromatin. Also has auto-methylation activity on Cys-3882 in absence of histone H3 substrate. The polypeptide is Histone-lysine N-methyltransferase 2A (KMT2A) (Homo sapiens (Human)).